Reading from the N-terminus, the 466-residue chain is Proline--tRNA ligase (466 aa).

This sequence belongs to the class-II aminoacyl-tRNA synthetase family. ProS type 3 subfamily. In terms of assembly, homodimer.

Its subcellular location is the cytoplasm. The enzyme catalyses tRNA(Pro) + L-proline + ATP = L-prolyl-tRNA(Pro) + AMP + diphosphate. In terms of biological role, catalyzes the attachment of proline to tRNA(Pro) in a two-step reaction: proline is first activated by ATP to form Pro-AMP and then transferred to the acceptor end of tRNA(Pro). This Picrophilus torridus (strain ATCC 700027 / DSM 9790 / JCM 10055 / NBRC 100828 / KAW 2/3) protein is Proline--tRNA ligase.